Reading from the N-terminus, the 295-residue chain is MPSGSDLSDTDTTLVVVTGVSGGGRSTVARALENVGYYVVDNLPQALMLDMAELAMKAGGAARRTAMVLDVRSRAFSTDLVGAIRELKERGFAPWVVFVDADDEVLIRRFESVRRSHPLQGEGRLADGIAVERGLLEGARDQADVIVDTSHLNVNQLRRRIEELFGAEDARRLRVTVVSFGFKYGVPPDADFVCDARFLPNPYWVPELREHTGQTEAVSSYVLGQEGAEAFVATYTDLINATTAGFEREGKRYLTVAVGCTGGKHRSVAIAEELAARLGRTVIAANTQHRDLGRE.

19–26 contributes to the ATP binding site; it reads GVSGGGRS. 70 to 73 lines the GTP pocket; sequence DVRS.

It belongs to the RapZ-like family.

Functionally, displays ATPase and GTPase activities. In Salinispora arenicola (strain CNS-205), this protein is Nucleotide-binding protein Sare_3328.